The sequence spans 341 residues: CRISPR-associated endonuclease Cas1 (341 aa).

Positions 173, 242, and 257 each coordinate Mn(2+).

Belongs to the CRISPR-associated endonuclease Cas1 family. As to quaternary structure, homodimer, forms a heterotetramer with a Cas2 homodimer. Mg(2+) is required as a cofactor. Requires Mn(2+) as cofactor.

Its function is as follows. CRISPR (clustered regularly interspaced short palindromic repeat), is an adaptive immune system that provides protection against mobile genetic elements (viruses, transposable elements and conjugative plasmids). CRISPR clusters contain spacers, sequences complementary to antecedent mobile elements, and target invading nucleic acids. CRISPR clusters are transcribed and processed into CRISPR RNA (crRNA). Acts as a dsDNA endonuclease. Involved in the integration of spacer DNA into the CRISPR cassette. This chain is CRISPR-associated endonuclease Cas1, found in Korarchaeum cryptofilum (strain OPF8).